We begin with the raw amino-acid sequence, 204 residues long: ATP phosphoribosyltransferase (204 aa).

The protein belongs to the ATP phosphoribosyltransferase family. Short subfamily. In terms of assembly, heteromultimer composed of HisG and HisZ subunits.

The protein resides in the cytoplasm. It carries out the reaction 1-(5-phospho-beta-D-ribosyl)-ATP + diphosphate = 5-phospho-alpha-D-ribose 1-diphosphate + ATP. It participates in amino-acid biosynthesis; L-histidine biosynthesis; L-histidine from 5-phospho-alpha-D-ribose 1-diphosphate: step 1/9. In terms of biological role, catalyzes the condensation of ATP and 5-phosphoribose 1-diphosphate to form N'-(5'-phosphoribosyl)-ATP (PR-ATP). Has a crucial role in the pathway because the rate of histidine biosynthesis seems to be controlled primarily by regulation of HisG enzymatic activity. The protein is ATP phosphoribosyltransferase of Staphylococcus aureus (strain bovine RF122 / ET3-1).